Consider the following 580-residue polypeptide: Methyl-CpG-binding domain protein 4 (580 aa).

A disordered region spans residues 1–36; it reads MGTTGLESLSLGDRGAAPTVTSSERLVPDPPNDLRK. One can recognise an MBD domain in the interval 76-148; it reads ATAGTECRKS…EDFDFTVLSK (73 aa). Ser318 and Ser428 each carry phosphoserine. Asp560 is a catalytic residue.

In terms of assembly, interacts with MLH1.

The protein resides in the nucleus. In terms of biological role, mismatch-specific DNA N-glycosylase involved in DNA repair. Has thymine glycosylase activity and is specific for G:T mismatches within methylated and unmethylated CpG sites. Can also remove uracil or 5-fluorouracil in G:U mismatches. Has no lyase activity. Was first identified as methyl-CpG-binding protein. This Homo sapiens (Human) protein is Methyl-CpG-binding domain protein 4.